A 264-amino-acid polypeptide reads, in one-letter code: Undecaprenyl-diphosphatase (264 aa).

8 consecutive transmembrane segments (helical) span residues methionine 1–isoleucine 21, glutamine 39–phenylalanine 59, serine 83–phenylalanine 103, serine 113–leucine 133, methionine 143–valine 163, alanine 184–isoleucine 204, leucine 220–isoleucine 240, and isoleucine 243–phenylalanine 263.

The protein belongs to the UppP family.

Its subcellular location is the cell inner membrane. It carries out the reaction di-trans,octa-cis-undecaprenyl diphosphate + H2O = di-trans,octa-cis-undecaprenyl phosphate + phosphate + H(+). Its function is as follows. Catalyzes the dephosphorylation of undecaprenyl diphosphate (UPP). Confers resistance to bacitracin. The sequence is that of Undecaprenyl-diphosphatase from Campylobacter concisus (strain 13826).